An 879-amino-acid polypeptide reads, in one-letter code: Beta-alanyl-bioamine nonribosomal peptide synthetase ebony (879 aa).

The adenylation stretch occupies residues 26–540 (FEEQQLRHAD…EHVPLLVNGK (515 aa)). In terms of domain architecture, Carrier spans 573–650 (EDLKLTARDL…EIIEKMAANH (78 aa)). O-(pantetheine 4'-phosphoryl)serine is present on S611. Residues 666–679 (LKMEAVPLRLEHRQ) are condensation. Position 696 (E696) interacts with dopamine. E696 lines the histamine pocket. Residues T825 and N827 each coordinate beta-alanine.

This sequence belongs to the NRP synthetase family. Pantetheine 4'-phosphate serves as cofactor. Requires Mg(2+) as cofactor. As to expression, expressed in the optic neuropils in the lamina and in distinct cells at the distal border of the medulla cortex (at protein level). Expressed in the protocerebrum and thoracic ganglia (at protein level). Expressed in antennal lobes, antennal nerves and subesophagic ganglion (at protein level). Specifically, expressed in epithelial glial cells of the medulla that surround the synaptic cleft of photoreceptor axonal endings (at protein level). Expressed in some cells in the cuticle.

The protein resides in the cytoplasm. The enzyme catalyses histamine + beta-alanine + ATP = carcinine + AMP + diphosphate + H(+). It carries out the reaction beta-alanine + ATP + H(+) = beta-alanyl-5'-AMP + diphosphate. It catalyses the reaction beta-alanyl-5'-AMP + holo-[peptidyl-carrier protein] = beta-alanyl-[peptidyl-carrier protein] + AMP + H(+). The catalysed reaction is beta-alanyl-[peptidyl-carrier protein] + histamine = carcinine + holo-[peptidyl-carrier protein] + H(+). The enzyme catalyses dopamine + beta-alanine + ATP = beta-alanyl-dopamine + AMP + diphosphate + H(+). It carries out the reaction beta-alanyl-[peptidyl-carrier protein] + dopamine = beta-alanyl-dopamine + holo-[peptidyl-carrier protein] + H(+). Functionally, nonribosomal peptide synthase which is required for the regulation of histamine and dopamine levels in various tissues through their condensation with beta-alanine. In epithelial glial cells, plays an essential role in the inactivation of histamine, the main neurotransmitter in the optical nerve system, by catalyzing the conversion of histamine into carcinine. In the cuticle, catalyzes the condensation of beta-alanine with dopamine to form beta-alanyl-dopamine (NBAD), a metabolite involved in the pigmentation and sclerotization of the insect cuticle. Also, regulates the cuticular hydrocarbon composition in females. Acts downstream of the body clock to regulate circadian behavioral rhythms. Can also condense beta-alanine with biogenic amines tyramine, octopamine, and serotonin in vitro. This chain is Beta-alanyl-bioamine nonribosomal peptide synthetase ebony, found in Drosophila melanogaster (Fruit fly).